A 550-amino-acid chain; its full sequence is Arginine--tRNA ligase (550 aa).

The short motif at alanine 130–glycine 140 is the 'HIGH' region element.

Belongs to the class-I aminoacyl-tRNA synthetase family. As to quaternary structure, monomer.

It is found in the cytoplasm. The catalysed reaction is tRNA(Arg) + L-arginine + ATP = L-arginyl-tRNA(Arg) + AMP + diphosphate. This Mycobacterium sp. (strain JLS) protein is Arginine--tRNA ligase.